The following is a 293-amino-acid chain: Beta-porphyranase B (293 aa).

A signal peptide spans 1 to 21; sequence MKLSNQFLITITLLITSITFA. Residues 38–291 enclose the GH16 domain; that stretch reads QEWKLIENMS…WVRSWQLVDS (254 aa). W67, R70, E156, E161, and E256 together coordinate substrate. The Nucleophile role is filled by E156. The Proton donor role is filled by E161.

It belongs to the glycosyl hydrolase 16 family.

The protein localises to the periplasm. It catalyses the reaction Hydrolysis of beta-D-galactopyranose-(1-&gt;4)-alpha-L-galactopyranose-6-sulfate linkages in porphyran.. Functionally, cleaves the sulfated polysaccharide porphyran at the (1-&gt;4) linkages between beta-D-galactopyranose and alpha-L-galactopyranose-6-sulfate, forming mostly the disaccharide alpha-L-galactopyranose-6-sulfate-(1-&gt;3)-beta-D-galactose. Some longer oligosaccharides of even number of residues are also observed. Inactive on the non-sulfated agarose portion of the porphyran backbone. In contrast to PorA, tolerates the presence of 3-6-anhydro-L-galactose in subsite -2. This chain is Beta-porphyranase B (porB), found in Zobellia galactanivorans (strain DSM 12802 / CCUG 47099 / CIP 106680 / NCIMB 13871 / Dsij).